The following is a 144-amino-acid chain: Deoxyuridine 5'-triphosphate nucleotidohydrolase (144 aa).

Residues Ser-66, Gly-79, Asp-82, Tyr-85, Lys-90, Arg-134, Phe-139, and Gly-140 each contribute to the dUMP site.

It belongs to the dUTPase family. As to quaternary structure, homotrimer. Mg(2+) serves as cofactor.

It catalyses the reaction dUTP + H2O = dUMP + diphosphate + H(+). Its pathway is pyrimidine metabolism; dUMP biosynthesis; dUMP from dCTP (dUTP route): step 2/2. Involved in nucleotide metabolism via production of dUMP, the immediate precursor of thymidine nucleotides, and decreases the intracellular concentration of dUTP so that uracil cannot be incorporated into DNA. This chain is Deoxyuridine 5'-triphosphate nucleotidohydrolase (DUT1), found in Candida glabrata (strain ATCC 2001 / BCRC 20586 / JCM 3761 / NBRC 0622 / NRRL Y-65 / CBS 138) (Yeast).